We begin with the raw amino-acid sequence, 915 residues long: Clathrin coat assembly protein AP180 (915 aa).

Residues 14–145 enclose the ENTH domain; the sequence is QYSVTGSAVA…FSYRQMAFDF (132 aa). 3 disordered regions span residues 285–326, 391–425, and 497–522; these read LEGK…DTSP, SVPS…ATTA, and PETS…PSPA. Phosphoserine occurs at positions 296, 300, and 306. Positions 302 to 324 are enriched in polar residues; the sequence is LSKSSPATTVTSPNSTPAKTIDT. An O-linked (GlcNAc) threonine glycan is attached at threonine 310. Serine 313 is subject to Phosphoserine. Position 317 is a phosphothreonine (threonine 317). Low complexity-rich tracts occupy residues 410 to 425 and 500 to 511; these read TTTT…ATTA and SAPVVTPTASTA. The segment covering 512-522 has biased composition (pro residues); it reads PPVPATAPSPA. Phosphoserine is present on residues serine 594, serine 600, proline 627, serine 640, and serine 646. Residues 720-735 show a composition bias toward low complexity; that stretch reads TTPSTSSSSSFDPSGD. The interval 720–765 is disordered; the sequence is TTPSTSSSSSFDPSGDLLMPTMAPSGQPAPVSMVPPSPAMSASKGL. The residue at position 775 (serine 775) is a Phosphoserine. Positions 817–855 are disordered; it reads SAGVPPQGTVPPTSSVPPGAGAPSVGQPGAGYGMPPAGT. Arginine 873 carries the asymmetric dimethylarginine; alternate modification. At arginine 873 the chain carries Omega-N-methylarginine; alternate. The tract at residues 875–915 is disordered; the sequence is PFGAAAVPGTQLSPSPTPATQSPKKPPAKDPLADLNIKDFL. The span at 884–896 shows a compositional bias: polar residues; sequence TQLSPSPTPATQS. Residues 901 to 915 are compositionally biased toward basic and acidic residues; sequence PAKDPLADLNIKDFL.

It belongs to the PICALM/SNAP91 family. As to quaternary structure, binds AP2A2. Interacts with AP2B1; clathrin competes with SNAP91. In terms of processing, thr-310 can be modified by the addition of N-acetylglucosamine which can be further phosphorylated. The form with phosphorylated O-linked N-acetylglucosamine is predominant in brain synaptosomes. There is no evidence for direct Thr-310 phosphorylation.

It is found in the cell membrane. Its subcellular location is the membrane. It localises to the coated pit. Functionally, adaptins are components of the adapter complexes which link clathrin to receptors in coated vesicles. Clathrin-associated protein complexes are believed to interact with the cytoplasmic tails of membrane proteins, leading to their selection and concentration. Binding of AP180 to clathrin triskelia induces their assembly into 60-70 nm coats. In Rattus norvegicus (Rat), this protein is Clathrin coat assembly protein AP180 (Snap91).